The following is a 100-amino-acid chain: Urease subunit gamma (100 aa).

It belongs to the urease gamma subunit family. Heterotrimer of UreA (gamma), UreB (beta) and UreC (alpha) subunits. Three heterotrimers associate to form the active enzyme.

It is found in the cytoplasm. It catalyses the reaction urea + 2 H2O + H(+) = hydrogencarbonate + 2 NH4(+). It participates in nitrogen metabolism; urea degradation; CO(2) and NH(3) from urea (urease route): step 1/1. The protein is Urease subunit gamma of Polaromonas naphthalenivorans (strain CJ2).